A 345-amino-acid chain; its full sequence is Ferrochelatase (345 aa).

Residues histidine 215 and glutamate 296 each coordinate Fe cation.

This sequence belongs to the ferrochelatase family.

Its subcellular location is the cytoplasm. The catalysed reaction is heme b + 2 H(+) = protoporphyrin IX + Fe(2+). It participates in porphyrin-containing compound metabolism; protoheme biosynthesis; protoheme from protoporphyrin-IX: step 1/1. In terms of biological role, catalyzes the ferrous insertion into protoporphyrin IX. The sequence is that of Ferrochelatase from Rhodopseudomonas palustris (strain BisA53).